Reading from the N-terminus, the 469-residue chain is MSIQTQEAHDMSLKSLSLIATHSHIVGLGLDENLQPKPSSQGMVGQLQARRAAGVILKMVQNGTIAGRAVLVAGPPSTGKTALAMGLSQSLGADVPFTAMAGSEIFSLELSKTEALTQAFRKSIGVKIKEDTELIEGEVVEIQIDRSITGGHKQGKLTIKTTDMETIYELGNKMIDGLTKEKVLAGDVISIDKACGKITKLGRSFARSRDYDAMGPDTKFVQCPEGELQKRKSVVHTVSLHEIDVINSRTQGFLALFTGDTGEIRSEVRDQINTKVAEWKEEGKAEIVPGVLFIDEVHMLDIECFSFINRALEDEFAPIVIMATNRGISKTRGTNYKSPHGLPLDLLDRSIIITTQNYSEQEIKTILSIRSQEEEVELTEDALDLLTKIGGETSLRYSSNLIAVSQQIAQKRKSSSVDVQDVKRAYLLFLDSTRSAKYLQEYESRYIDDHGRVDISTTGRNADAMDTNE.

74-81 provides a ligand contact to ATP; that stretch reads GPPSTGKT.

The protein belongs to the RuvB family. As to quaternary structure, may form heterododecamers with RVB1. Component of the SWR1 chromatin remodeling complex, the INO80 chromatin remodeling complex, and of the R2TP complex.

Its subcellular location is the nucleus. The catalysed reaction is ATP + H2O = ADP + phosphate + H(+). Functionally, DNA helicase which participates in several chromatin remodeling complexes, including the SWR1 and the INO80 complexes. The SWR1 complex mediates the ATP-dependent exchange of histone H2A for the H2A variant HZT1 leading to transcriptional regulation of selected genes by chromatin remodeling. The INO80 complex remodels chromatin by shifting nucleosomes and is involved in DNA repair. Also involved in pre-rRNA processing. This Eremothecium gossypii (strain ATCC 10895 / CBS 109.51 / FGSC 9923 / NRRL Y-1056) (Yeast) protein is RuvB-like helicase 2 (RVB2).